Consider the following 457-residue polypeptide: Cysteine--tRNA ligase (457 aa).

Zn(2+) is bound at residue cysteine 30. Residues 32–42 (PTVYAPAHIGN) carry the 'HIGH' region motif. Zn(2+) contacts are provided by cysteine 221, histidine 246, and glutamate 250. A 'KMSKS' region motif is present at residues 278–282 (KMSKS). ATP is bound at residue lysine 281.

Belongs to the class-I aminoacyl-tRNA synthetase family. As to quaternary structure, monomer. The cofactor is Zn(2+).

It is found in the cytoplasm. The enzyme catalyses tRNA(Cys) + L-cysteine + ATP = L-cysteinyl-tRNA(Cys) + AMP + diphosphate. In Opitutus terrae (strain DSM 11246 / JCM 15787 / PB90-1), this protein is Cysteine--tRNA ligase.